The chain runs to 59 residues: UPF0434 protein Ping_0902 (59 aa).

It belongs to the UPF0434 family.

This Psychromonas ingrahamii (strain DSM 17664 / CCUG 51855 / 37) protein is UPF0434 protein Ping_0902.